The following is a 186-amino-acid chain: Zinc finger AN1 domain-containing stress-associated protein 12 (186 aa).

2 AN1-type zinc fingers span residues 10-58 and 97-147; these read PDLG…HGSR and KKKK…INTA. Zn(2+)-binding residues include cysteine 16, cysteine 21, cysteine 31, cysteine 34, cysteine 39, histidine 42, histidine 48, cysteine 50, cysteine 103, cysteine 108, cysteine 120, cysteine 123, cysteine 128, histidine 131, histidine 137, and cysteine 139. Residues 167–186 form a disordered region; sequence KGCGRGSSVSSKSSPSVRSF. Over residues 172–186 the composition is skewed to low complexity; the sequence is GSSVSSKSSPSVRSF.

In terms of biological role, may be involved in environmental stress response. The polypeptide is Zinc finger AN1 domain-containing stress-associated protein 12 (SAP12) (Arabidopsis thaliana (Mouse-ear cress)).